We begin with the raw amino-acid sequence, 385 residues long: S-adenosylmethionine synthase (385 aa).

Residue histidine 15 coordinates ATP. A Mg(2+)-binding site is contributed by aspartate 17. Glutamate 43 provides a ligand contact to K(+). L-methionine-binding residues include glutamate 56 and glutamine 99. The interval 99–109 (QSPDINQGVDR) is flexible loop. Residues 164–166 (DAK), 230–231 (RF), aspartate 239, 245–246 (RK), alanine 262, and lysine 266 each bind ATP. An L-methionine-binding site is contributed by aspartate 239. An L-methionine-binding site is contributed by lysine 270.

Belongs to the AdoMet synthase family. In terms of assembly, homotetramer; dimer of dimers. Mg(2+) is required as a cofactor. The cofactor is K(+).

It is found in the cytoplasm. The enzyme catalyses L-methionine + ATP + H2O = S-adenosyl-L-methionine + phosphate + diphosphate. Its pathway is amino-acid biosynthesis; S-adenosyl-L-methionine biosynthesis; S-adenosyl-L-methionine from L-methionine: step 1/1. Catalyzes the formation of S-adenosylmethionine (AdoMet) from methionine and ATP. The overall synthetic reaction is composed of two sequential steps, AdoMet formation and the subsequent tripolyphosphate hydrolysis which occurs prior to release of AdoMet from the enzyme. This Hamiltonella defensa subsp. Acyrthosiphon pisum (strain 5AT) protein is S-adenosylmethionine synthase.